The sequence spans 365 residues: PDZ and LIM domain protein 3 (365 aa).

In terms of domain architecture, PDZ spans 1-84 (MPQNVILPGP…QLCLKIDRAE (84 aa)). At Ser18 the chain carries Phosphoserine. Residues 126 to 156 (FIIPGRSSGCSTPSGIDGGSGRSTPSSVSTL) are disordered. Positions 147–156 (RSTPSSVSTL) are enriched in polar residues. One can recognise an LIM zinc-binding domain in the interval 293 to 352 (PLCDKCGSGIVGAVVKARDKYRHPECFVCADCNLNLKQKGYFFVEGELYCETHARARMRP).

As to quaternary structure, interacts with ACTN2. Forms a heterodimer with PDLIM4 (via LIM domain).

The protein resides in the cytoplasm. It localises to the myofibril. The protein localises to the sarcomere. Its subcellular location is the z line. Functionally, may play a role in the organization of actin filament arrays within muscle cells. The polypeptide is PDZ and LIM domain protein 3 (PDLIM3) (Sus scrofa (Pig)).